Consider the following 253-residue polypeptide: MTNTQVTLVQIDNYGPWTVTPEPRREVDLQTLQSRLYADLSQLIGNRMGYVFFTRFDNMVAVTNGLDADAHALIQESVGNRYPVTVSLSIGVDSSPAAALGTATDQLQDAGSAQDKGRTEILRGDPIQPSERTDTDVQIAHFDVNDATGKYTDQLNEFDSFINIEQGYAELMRYMRHENDSLSFFVGGDNIIAVCDGIDEAAYLDAIEHVNETVGVELKVGVGLDRTAQAAGMAAKHALETCREENTDVEFAR.

The protein belongs to the archaeal-type GTP cyclohydrolase family.

It catalyses the reaction GTP + 3 H2O = 2-amino-5-formylamino-6-(5-phospho-D-ribosylamino)pyrimidin-4(3H)-one + 2 phosphate + 2 H(+). Its function is as follows. Catalyzes the formation of 2-amino-5-formylamino-6-ribofuranosylamino-4(3H)-pyrimidinone ribonucleotide monophosphate and inorganic phosphate from GTP. Also has an independent pyrophosphate phosphohydrolase activity. The sequence is that of GTP cyclohydrolase III from Natronomonas pharaonis (strain ATCC 35678 / DSM 2160 / CIP 103997 / JCM 8858 / NBRC 14720 / NCIMB 2260 / Gabara) (Halobacterium pharaonis).